The sequence spans 307 residues: N-acetylmuramic acid 6-phosphate etherase (307 aa).

Residues 62–225 form the SIS domain; it reads IVSSFNRGGR…STASMIRIGK (164 aa). Glutamate 90 acts as the Proton donor in catalysis. Glutamate 121 is an active-site residue.

The protein belongs to the GCKR-like family. MurNAc-6-P etherase subfamily. In terms of assembly, homodimer.

The catalysed reaction is N-acetyl-D-muramate 6-phosphate + H2O = N-acetyl-D-glucosamine 6-phosphate + (R)-lactate. Its pathway is amino-sugar metabolism; 1,6-anhydro-N-acetylmuramate degradation. It participates in amino-sugar metabolism; N-acetylmuramate degradation. The protein operates within cell wall biogenesis; peptidoglycan recycling. In terms of biological role, specifically catalyzes the cleavage of the D-lactyl ether substituent of MurNAc 6-phosphate, producing GlcNAc 6-phosphate and D-lactate. Together with AnmK, is also required for the utilization of anhydro-N-acetylmuramic acid (anhMurNAc) either imported from the medium or derived from its own cell wall murein, and thus plays a role in cell wall recycling. The polypeptide is N-acetylmuramic acid 6-phosphate etherase (Pseudoalteromonas atlantica (strain T6c / ATCC BAA-1087)).